The chain runs to 180 residues: uncharacterized protein (180 aa).

A coiled-coil region spans residues 114 to 147 (EDIYEDIVDVRLENQSLEEQLEDFKECSRALKKY).

Belongs to the mimivirus L74/L77/R857 family.

This is an uncharacterized protein from Acanthamoeba polyphaga mimivirus (APMV).